A 4095-amino-acid polypeptide reads, in one-letter code: Protein adenylyltransferase and cysteine protease IbpA (4095 aa).

The N-terminal stretch at 1-97 (MNKNCYKLIF…MVAAPNFAQS (97 aa)) is a signal peptide. Binds bovine IgG2 Fc stretches follow at residues 972-1515 (SERI…FVKA) and 1116-1255 (SEVQ…FLKE). 5 disordered regions span residues 1082 to 1117 (EVSD…LPSE), 1130 to 1154 (KEKA…LQSD), 1204 to 1223 (QEAL…AKAK), 1625 to 1652 (TVSH…TGFT), and 1705 to 1732 (EEDE…QKEE). Residues 1087 to 1096 (WERDPDEPDE) show a composition bias toward acidic residues. 2 stretches are compositionally biased toward basic and acidic residues: residues 1097 to 1117 (PDYK…LPSE) and 1130 to 1139 (KEKAQQKRQA). The stretch at 1116–1247 (SEVQDKLRQK…AKDHQIEEAL (132 aa)) forms a coiled coil. Over residues 1716-1727 (KAKAAPDATDNA) the composition is skewed to low complexity. 12 consecutive repeat copies span residues 2250–2271 (YSTL…SDDI), 2272–2295 (YSLL…AEGA), 2296–2317 (YDLL…SDDL), 2318–2343 (YSTV…AAGP), 2344–2365 (YSLL…GEGP), 2366–2387 (YSLL…SNST), 2388–2413 (YSTV…VAGP), 2414–2435 (YSLL…GEGP), 2436–2457 (YSLL…SDSP), 2458–2483 (YSTV…VAGP), 2484–2505 (YSLL…GEGP), and 2506–2527 (YSLL…SDSP). Residues 2250–2527 (YSTLGDQNAN…RTLGGESDSP (278 aa)) are 12 X 22 AA approximate repeats. Composition is skewed to polar residues over residues 2592–2611 (SDTE…TRNA) and 2794–2803 (TAPQKTSPVK). Disordered regions lie at residues 2592–2617 (SDTE…PLPP), 2765–2809 (TIGE…SAEG), 2825–2894 (AKGQ…SPKR), 2914–2933 (LKSK…EPIY), 2943–3033 (LARA…KSED), and 3049–3069 (NKSQ…PNYD). The segment covering 2880–2889 (PFPSEFSSEP) has biased composition (low complexity). Composition is skewed to polar residues over residues 2977 to 2996 (SNLS…QSVA) and 3005 to 3018 (AESN…QKLQ). The span at 3052-3062 (QAKEAKSEQET) shows a compositional bias: basic and acidic residues. Residues 3218 to 3355 (LTVEMIEKLN…AEVVKEFLTE (138 aa)) form the Fido 1 domain. A yopT-like region spans residues 3222-4095 (MIEKLNHGLR…FNVVNYKKNN (874 aa)). The interval 3354-3698 (TELGKKSSPQ…VDFINRAKNE (345 aa)) is binds bovine IgG2 Fc. Disordered regions lie at residues 3357–3415 (GKKS…PSVP) and 3432–3454 (AELK…ATGV). Composition is skewed to polar residues over residues 3360–3379 (SSPQ…SPVT) and 3388–3401 (VENT…TIKQ). Over residues 3443 to 3454 (KAAEKSEGATGV) the composition is skewed to basic and acidic residues. The tract at residues 3535-3557 (IPEATVKQMSHLPEFDDILTEGA) is arm region. Residues 3640–3777 (LTVQMIENLN…SEVVVEFLKE (138 aa)) enclose the Fido 2 domain. Residues 3670–3671 (KE), 3722–3724 (GNG), R3728, and Q3757 contribute to the ATP site. Over residues 3783–3798 (SKEDNEQNLEKTDRTS) the composition is skewed to basic and acidic residues. The tract at residues 3783-3829 (SKEDNEQNLEKTDRTSTDLTESAVENSAALSSGTVRSATVSETVTET) is disordered. Over residues 3799 to 3815 (TDLTESAVENSAALSSG) the composition is skewed to polar residues. Over residues 3816–3829 (TVRSATVSETVTET) the composition is skewed to low complexity. Residues C3910, H4033, and D4048 each act as for cysteine protease activity in the active site.

The protein in the central section; belongs to the fic family. This sequence in the C-terminal section; belongs to the peptidase C58 family. In terms of assembly, immunoglobulin-binding protein. Post-translationally, the long form of the protein is probably processed, and/or the transcript may be subject to differential translational initiation.

Its subcellular location is the secreted. It localises to the cell outer membrane. The enzyme catalyses L-tyrosyl-[protein] + ATP = O-(5'-adenylyl)-L-tyrosyl-[protein] + diphosphate. It catalyses the reaction L-threonyl-[protein] + ATP = 3-O-(5'-adenylyl)-L-threonyl-[protein] + diphosphate. Functionally, adenylyltransferase involved in virulence by mediating the addition of adenosine 5'-monophosphate (AMP) to specific tyrosine residue of host Rho GTPases RhoA, Rac and Cdc42. The resulting AMPylation inactivates Rho GTPases, thereby inhibiting actin assembly in infected cells. Probably also acts as a cysteine protease, which may play a central role after invasion of host cell and in virulence. Possible member (with IbpB) of a 2 partner secretion. Probably able to bind bovine epithelial cells (host cells). May participate in the formation of fibrils at the surface of the bacteria. The polypeptide is Protein adenylyltransferase and cysteine protease IbpA (ibpA) (Histophilus somni (strain 2336) (Haemophilus somnus)).